The sequence spans 121 residues: CRISPR system Cms protein Csm2 (121 aa).

This sequence belongs to the CRISPR-associated Csm2 family. In terms of assembly, part of the Csm effector complex that includes at least Cas10(1), Csm2(3), Csm3(5), Csm4(1), Csm5(1) and mature crRNA. The Csm complex is elongated and slightly twisted with a maximal length of 215 Angstroms and a diameter of 75-80 Angstroms. It has been modeled to have a central protein filamant of Csm3 subunits along which the dsRNA helix of paired crRNA and target RNA binds. The filament is capped at one end by Cas10 and Csm4 and at the other end by Csm5; ssDNA is thought to bind to the N-terminal HD domain of Cas10. Csm with a precursor crRNA does not include Csm5, while Cas6, the enzyme probably involved in pre-crRNA processing, is found associated with a subset of the Csm complex.

Its function is as follows. CRISPR (clustered regularly interspaced short palindromic repeat) is an adaptive immune system that provides protection against mobile genetic elements (viruses, transposable elements and conjugative plasmids). CRISPR clusters contain spacers, sequences complementary to antecedent mobile elements, and target invading nucleic acids. CRISPR clusters are transcribed and processed into CRISPR RNA (crRNA). The type III-A Csm effector complex binds crRNA and acts as a crRNA-guided RNase, DNase and cyclic oligoadenylate synthase; binding of target RNA cognate to the crRNA is required for all activities. In a heterologous host this Csm effector complex restricts ssRNA phage MS2, suggesting it may target RNA viruses in vivo. Csm functions as a non-specific ssDNase. Base-pairing between crRNA and target RNA to form a ternary Csm complex activates a ssDNase activity; target RNA cleavage suppresses the ssDNase, a temporal control that prevents uncontrolled DNA degradation. Viral RNA transcripts probably tether the Csm complex to the viral genome, recruiting Cas10 ssDNA activity which is able to degrade DNA in the transcription bubble, spatially controlling the DNase activity. In terms of biological role, this subunit may be involved in monitoring complementarity of crRNA and target RNA. The sequence is that of CRISPR system Cms protein Csm2 from Streptococcus thermophilus.